A 951-amino-acid chain; its full sequence is PE-PGRS family protein PE_PGRS3 (951 aa).

Positions 4-94 (VIAAPEVIAA…GAYAAAEAAA (91 aa)) constitute a PE domain. Positions 887–919 (CRRQRRADRQRRQRRQRRQSRGHARCRRHRRAA) are enriched in basic residues. The tract at residues 887–951 (CRRQRRADRQ…GISCSPQMMP (65 aa)) is disordered.

Belongs to the mycobacterial PE family. PGRS subfamily.

It is found in the cell outer membrane. Its subcellular location is the secreted. It localises to the cell wall. The protein localises to the cell surface. Functionally, the arginine-rich C-terminal region protrudes from the mycobacterial membrane and mediates M.tuberculosis entry into host epithelial cells. May serve as a bridge between mycobacteria and host cells by interacting with specific host phospholipids and extracting them from host cells, for their direct integration or as a source of phosphate, during phases of TB pathogenesis when M.tuberculosis is short of phosphate supply. The sequence is that of PE-PGRS family protein PE_PGRS3 (PE_PGRS3) from Mycobacterium tuberculosis (strain CDC 1551 / Oshkosh).